Consider the following 72-residue polypeptide: Cell division protein ZapB (72 aa).

Residues 3-71 are a coiled coil; the sequence is LSIIDQLEEK…LRSLLGQIDN (69 aa).

It belongs to the ZapB family. Homodimer. The ends of the coiled-coil dimer bind to each other, forming polymers. Interacts with FtsZ.

It localises to the cytoplasm. Functionally, non-essential, abundant cell division factor that is required for proper Z-ring formation. It is recruited early to the divisome by direct interaction with FtsZ, stimulating Z-ring assembly and thereby promoting cell division earlier in the cell cycle. Its recruitment to the Z-ring requires functional FtsA or ZipA. This chain is Cell division protein ZapB, found in Haemophilus ducreyi (strain 35000HP / ATCC 700724).